The primary structure comprises 243 residues: Ribonuclease 3 (243 aa).

In terms of domain architecture, RNase III spans I10–G146. E59 lines the Mg(2+) pocket. Residue D63 is part of the active site. The Mg(2+) site is built by D132 and E135. Residue E135 is part of the active site. The 70-residue stretch at D172 to Q241 folds into the DRBM domain. The segment covering G219–A231 has biased composition (basic and acidic residues). The segment at G219–K243 is disordered.

It belongs to the ribonuclease III family. As to quaternary structure, homodimer. Mg(2+) is required as a cofactor.

The protein resides in the cytoplasm. It catalyses the reaction Endonucleolytic cleavage to 5'-phosphomonoester.. In terms of biological role, digests double-stranded RNA. Involved in the processing of primary rRNA transcript to yield the immediate precursors to the large and small rRNAs (23S and 16S). Processes some mRNAs, and tRNAs when they are encoded in the rRNA operon. Processes pre-crRNA and tracrRNA of type II CRISPR loci if present in the organism. The chain is Ribonuclease 3 from Staphylococcus aureus (strain bovine RF122 / ET3-1).